Here is a 921-residue protein sequence, read N- to C-terminus: Isoleucine--tRNA ligase 1 (921 aa).

The 'HIGH' region motif lies at 57–67 (PYANGDIHMGH). Glu-552 serves as a coordination point for L-isoleucyl-5'-AMP. A 'KMSKS' region motif is present at residues 593 to 597 (KMSKS). Lys-596 contributes to the ATP binding site. Cys-888, Cys-891, Cys-908, and Cys-911 together coordinate Zn(2+).

Belongs to the class-I aminoacyl-tRNA synthetase family. IleS type 1 subfamily. In terms of assembly, monomer. The cofactor is Zn(2+).

It is found in the cytoplasm. It carries out the reaction tRNA(Ile) + L-isoleucine + ATP = L-isoleucyl-tRNA(Ile) + AMP + diphosphate. Its function is as follows. Catalyzes the attachment of isoleucine to tRNA(Ile). As IleRS can inadvertently accommodate and process structurally similar amino acids such as valine, to avoid such errors it has two additional distinct tRNA(Ile)-dependent editing activities. One activity is designated as 'pretransfer' editing and involves the hydrolysis of activated Val-AMP. The other activity is designated 'posttransfer' editing and involves deacylation of mischarged Val-tRNA(Ile). The protein is Isoleucine--tRNA ligase 1 of Bacillus cereus (strain ATCC 10987 / NRS 248).